We begin with the raw amino-acid sequence, 235 residues long: Protocatechuate 3,4-dioxygenase beta chain (235 aa).

Fe cation contacts are provided by Tyr-107, Tyr-146, His-159, and His-161.

The protein belongs to the intradiol ring-cleavage dioxygenase family. The enzyme is an oligomer of 12 copies of the alpha and beta chains. Fe(3+) serves as cofactor.

The catalysed reaction is 3,4-dihydroxybenzoate + O2 = 3-carboxy-cis,cis-muconate + 2 H(+). It functions in the pathway aromatic compound metabolism; beta-ketoadipate pathway; 3-carboxy-cis,cis-muconate from 3,4-dihydroxybenzoate: step 1/1. Plays an essential role in the utilization of numerous aromatic and hydroaromatic compounds via the beta-ketoadipate pathway. The chain is Protocatechuate 3,4-dioxygenase beta chain (pcaH) from Burkholderia cepacia (Pseudomonas cepacia).